Reading from the N-terminus, the 132-residue chain is MSMQDPIADMLTRIRNGQTAHKTILFMPSSKLKVAIARLLQEEGFIKDYKVEGNIKKKPVLKIFLKYFQGKPVIENIQRISRPSLRIYRKKTALPNIMGGMGIAIISTSKGIMTDYTARQAGLGGEIICHVA.

This sequence belongs to the universal ribosomal protein uS8 family. Part of the 30S ribosomal subunit. Contacts proteins S5 and S12.

One of the primary rRNA binding proteins, it binds directly to 16S rRNA central domain where it helps coordinate assembly of the platform of the 30S subunit. This chain is Small ribosomal subunit protein uS8, found in Baumannia cicadellinicola subsp. Homalodisca coagulata.